The sequence spans 222 residues: 7-cyano-7-deazaguanine synthase (222 aa).

9–19 (LSGGLDSATAA) contributes to the ATP binding site. Zn(2+) is bound by residues Cys-190, Cys-198, Cys-201, and Cys-204.

This sequence belongs to the QueC family. The cofactor is Zn(2+).

It catalyses the reaction 7-carboxy-7-deazaguanine + NH4(+) + ATP = 7-cyano-7-deazaguanine + ADP + phosphate + H2O + H(+). The protein operates within purine metabolism; 7-cyano-7-deazaguanine biosynthesis. Functionally, catalyzes the ATP-dependent conversion of 7-carboxy-7-deazaguanine (CDG) to 7-cyano-7-deazaguanine (preQ(0)). The chain is 7-cyano-7-deazaguanine synthase from Synechococcus sp. (strain RCC307).